The sequence spans 1086 residues: Rh5-interacting protein (1086 aa).

An N-terminal signal peptide occupies residues 1–19 (MFRIFFTLLIIILIKKTSA). Asn103, Asn144, Asn228, Asn303, Asn334, Asn480, Asn498, Asn506, Asn526, and Asn646 each carry an N-linked (GlcNAc...) asparagine glycan. EGF-like domains are found at residues 287–321 (RCTQ…NNCE) and 325–362 (LCTV…NKCY). EGF-like domains lie at 636 to 675 (SCSN…KLCE), 679 to 715 (DCES…GKCV), 719 to 753 (KCDL…GVCI), 818 to 854 (YCKD…GECI), 858 to 897 (SCLI…GKCV), 901 to 938 (KCVH…GVCL), and 942 to 979 (PCLK…DSCV). N-linked (GlcNAc...) asparagine glycans are attached at residues Asn964 and Asn1021.

As to quaternary structure, component of the PfRH5 adhesion complex composed of 1 copy of CyRPA, RH5 and RIPR; the complex is formed during merozoite invasion of host erythrocytes specifically at the interface between the parasite and host membranes. Within the complex, interacts with CyRPA. CyRPA recruitment of RIPR to RH5-P113-BSG leads to the formation of the PfRH5 adhesion complex which probably in turn releases RH5 from P113 while maintaining the interaction of the PfRH5 adhesion complex with BSG. Proteolytically cleaved into two chains of 125kDa and 65kDa which remain associated. The cleavage occurs at the schizont stage prior to the release of merozoites. Post-translationally, contains disulfide bonds.

The protein resides in the secreted. Its subcellular location is the cytoplasmic vesicle. It is found in the secretory vesicle. The protein localises to the microneme lumen. It localises to the cell membrane. The protein resides in the host cell membrane. Its function is as follows. Essential for the invasion of host erythrocytes by blood stage merozoites. As part of the PfRH5 adhesion complex, facilitates the interaction of RH5 and human BSG required for the Ca(2+) release into the erythrocyte. The protein is Rh5-interacting protein (RIPR) of Plasmodium falciparum (isolate 3D7).